A 321-amino-acid chain; its full sequence is Probable arabinan endo-1,5-alpha-L-arabinosidase A (321 aa).

An N-terminal signal peptide occupies residues 1-19 (MSASAFVAVASCLAALVHG). The active-site Proton acceptor is Asp34. Glu200 functions as the Proton donor in the catalytic mechanism.

The protein belongs to the glycosyl hydrolase 43 family.

The protein resides in the secreted. It catalyses the reaction Endohydrolysis of (1-&gt;5)-alpha-arabinofuranosidic linkages in (1-&gt;5)-arabinans.. It participates in glycan metabolism; L-arabinan degradation. Its function is as follows. Endo-1,5-alpha-L-arabinanase involved in degradation of pectin. Its preferred substrate is linear 1,5-alpha-L-arabinan. This chain is Probable arabinan endo-1,5-alpha-L-arabinosidase A (abnA), found in Neosartorya fischeri (strain ATCC 1020 / DSM 3700 / CBS 544.65 / FGSC A1164 / JCM 1740 / NRRL 181 / WB 181) (Aspergillus fischerianus).